Here is a 138-residue protein sequence, read N- to C-terminus: Small ribosomal subunit protein uS11c (138 aa).

Residues 1 to 22 form a disordered region; the sequence is MTKPIPRIGSRRSGRIGSRKAG. Basic residues predominate over residues 9–22; that stretch reads GSRRSGRIGSRKAG.

It belongs to the universal ribosomal protein uS11 family. Part of the 30S ribosomal subunit.

The protein localises to the plastid. Its subcellular location is the chloroplast. The sequence is that of Small ribosomal subunit protein uS11c from Piper cenocladum (Ant piper).